Reading from the N-terminus, the 104-residue chain is Circadian clock oscillator protein KaiB (104 aa).

It belongs to the KaiB family. As to quaternary structure, the KaiABC complex composition changes during the circadian cycle to control KaiC phosphorylation. Complexes KaiC(6), KaiA(2-4):KaiC(6), KaiB(6):KaiC(6) and KaiC(6):KaiB(6):KaiA(12) are among the most important forms, many form cooperatively. Undergoes a major conformational rearrangment; in the free state forms homotetramers as a dimer of dimers. When bound to the CI domain of KaiC switches to a monomeric thioredoxin-fold (KaiB(fs)). KaiB(fs) binds CikA, leading it to dephosphorylate phospho-RpaA.

In terms of biological role, key component of the KaiABC oscillator complex, which constitutes the main circadian regulator in cyanobacteria. Complex composition changes during the circadian cycle to control KaiC phosphorylation. KaiA stimulates KaiC autophosphorylation, while KaiB sequesters KaiA, leading to KaiC autodephosphorylation. Phospho-Ser-431 KaiC accumulation triggers binding of KaiB to form the KaiB(6):KaiC(6) complex, leading to changes in output regulators CikA and SasA. KaiB switches to a thioredoxin-like fold (KaiB(fs)) when bound to KaiC. KaiB(6):KaiC(6) formation exposes a site for KaiA binding that sequesters KaiA from KaiC, making the KaiC(6):KaiB(6):KaiA(12) complex that results in KaiC autodephosphorylation. Functionally, a metamorphic protein which reversibly switches between an inactive tetrameric fold and a rare, thioredoxin-like monomeric fold (KaiB(fs)). KaiB(fs) binds phospho-KaiC, KaiA and CikA. KaiA and CikA compete for binding to KaiB(fs), and KaiB(fs) and SasA compete for binding to KaiC, thus the clock oscillator and output signal pathway are tightly coupled. The sequence is that of Circadian clock oscillator protein KaiB from Picosynechococcus sp. (strain ATCC 27264 / PCC 7002 / PR-6) (Agmenellum quadruplicatum).